A 921-amino-acid polypeptide reads, in one-letter code: cGMP-dependent 3',5'-cyclic phosphodiesterase (921 aa).

M1 carries the post-translational modification N-acetylmethionine. Disordered regions lie at residues 1–21 (MRRQ…PPGS) and 177–198 (ESSV…DQKG). Positions 177–188 (ESSVAPEATQNP) are enriched in polar residues. GAF domains follow at residues 220–357 (DASS…STVL) and 389–528 (DVSV…GISI). 3',5'-cyclic GMP is bound by residues S411, D426, I445, Y468, and T479. The PDEase domain maps to 558-882 (SDDEYTKLLH…EHWTKVSHKF (325 aa)). The active-site Proton donor is H636. Residues H640, H676, D677, and D788 each contribute to the Zn(2+) site. A Mg(2+)-binding site is contributed by D677.

This sequence belongs to the cyclic nucleotide phosphodiesterase family. PDE2 subfamily. Homodimer. Zn(2+) is required as a cofactor. Mg(2+) serves as cofactor.

It localises to the cell membrane. The protein localises to the cytoplasm. It is found in the mitochondrion. Its subcellular location is the mitochondrion inner membrane. The protein resides in the mitochondrion outer membrane. It carries out the reaction a nucleoside 3',5'-cyclic phosphate + H2O = a nucleoside 5'-phosphate + H(+). It catalyses the reaction 3',5'-cyclic GMP + H2O = GMP + H(+). The catalysed reaction is 3',5'-cyclic AMP + H2O = AMP + H(+). With respect to regulation, the 3',5'-cyclic-AMP phosphodiesterase activity is stimulated by 3',5'-cyclic GMP. CGMP-activated cyclic nucleotide phosphodiesterase with a dual-specificity for the second messengers cAMP and cGMP, which are key regulators of many important physiological processes. Has a higher efficiency with cGMP compared to cAMP. Plays a role in cell growth and migration. Functionally, regulates mitochondrial cAMP levels and respiration. Involved in the regulation of mitochondria morphology/dynamics and apoptotic cell death via local modulation of cAMP/PKA signaling in the mitochondrion, including the monitoring of local cAMP levels at the outer mitochondrial membrane and of PKA-dependent phosphorylation of DNM1L. The polypeptide is cGMP-dependent 3',5'-cyclic phosphodiesterase (Bos taurus (Bovine)).